A 935-amino-acid polypeptide reads, in one-letter code: Formin-I (935 aa).

The stretch at 35–76 (QQQQQQQQQQINNENENSINNQENKENNNKDNNNNNNKEIKQ) forms a coiled coil. Disordered regions lie at residues 52–78 (SINN…KQSS), 380–511 (LSSA…QLTP), and 561–590 (KEKM…QSLS). Residues 384–407 (KKQPQQQPQKDVTSSSSSSSNSSS) are compositionally biased toward low complexity. The segment covering 418-428 (ITTNDSSSSNP) has biased composition (polar residues). The span at 431–443 (DFDKLSLSSDDKV) shows a compositional bias: basic and acidic residues. Residues 444–454 (NNNNVQIENTT) show a composition bias toward polar residues. Positions 444-505 (NNNNVQIENT…KPNNSGGGGG (62 aa)) constitute an FH1 domain. Over residues 456–482 (SVPPPPPVGAPPPPPPPPPPPPPPPPS) the composition is skewed to pro residues. Over residues 484 to 499 (LKLNRNRISTPKKPNN) the composition is skewed to polar residues. The region spanning 506–935 (GGQLTPLQKK…SLNLSTLNSK (430 aa)) is the FH2 domain. Positions 568-583 (NLNNSNNNNNNNSNNN) are enriched in low complexity. Coiled-coil stretches lie at residues 702–730 (SLLD…FIKV) and 803–834 (QSSL…QQLL).

The protein belongs to the formin homology family. Diaphanous subfamily.

Its function is as follows. Formins play an important role in the nucleation of actin and the formation of linear actin filaments. In Dictyostelium discoideum (Social amoeba), this protein is Formin-I (forI).